Here is a 1109-residue protein sequence, read N- to C-terminus: Protein argonaute 3 (1109 aa).

Residues 1–13 are compositionally biased toward basic and acidic residues; sequence MAGRGGRDPRRGY. 2 disordered regions span residues 1-83 and 125-220; these read MAGR…GLVR and DHRD…PLSK. Composition is skewed to gly residues over residues 14-30, 37-54, and 62-83; these read DGGY…GGTN, RGGG…GGRG, and DVLG…GLVR. Residues 125–134 are compositionally biased toward basic and acidic residues; sequence DHRDQHDHQS. Residues 135–161 show a composition bias toward basic residues; sequence QRHHHRHHHHQRQRHHHHHQRQQRRGS. One can recognise a PAZ domain in the interval 411-521; that stretch reads SVLDLVKTMK…VPIEFCNIPE (111 aa). The segment covering 527 to 545 has biased composition (basic and acidic residues); sequence VARLDDKKSDNKGEQEKPS. Positions 527 to 548 are disordered; it reads VARLDDKKSDNKGEQEKPSTKT. In terms of domain architecture, Piwi spans 720-1023; the sequence is LLFCPMLNRC…AAYRGRLYYE (304 aa).

It belongs to the argonaute family. Ago subfamily.

Its function is as follows. Probably involved in the RNA silencing pathway. May bind to short RNAs such as microRNAs (miRNAs) or short interfering RNAs (siRNAs), and represses the translation of mRNAs which are complementary to them. This chain is Protein argonaute 3 (AGO3), found in Oryza sativa subsp. japonica (Rice).